The following is a 234-amino-acid chain: MGAQWKVKHKEAAANAKGRTFGKLSKEIMIAARAGADPDMNSRLRLVVEQAKKASMPRETLERAIKKGAGLLGESVNFERLTYEGFAPHRVPVIVECLTDNINRTVSEIRVLFRKGQLGAAGSVSWDFLYQGMIEAVPAAADADPELAAIEAGAQDFESAEEGATLFLTESTDMDAVCKALPEFGFTVQSAQLGYRPKSTVDGLTEEQMAEVEAFLEAIDNHDDVQNVYVGLAG.

The protein belongs to the TACO1 family.

The protein localises to the cytoplasm. This Pseudomonas savastanoi pv. phaseolicola (strain 1448A / Race 6) (Pseudomonas syringae pv. phaseolicola (strain 1448A / Race 6)) protein is Probable transcriptional regulatory protein PSPPH_2212.